The primary structure comprises 350 residues: Probable dual-specificity RNA methyltransferase RlmN (350 aa).

Residue Glu91 is the Proton acceptor of the active site. The region spanning 97 to 327 (YHHGNSVCIS…VTIRREMGRD (231 aa)) is the Radical SAM core domain. Cysteines 104 and 332 form a disulfide. The [4Fe-4S] cluster site is built by Cys111, Cys115, and Cys118. S-adenosyl-L-methionine-binding positions include 158-159 (GE), Ser190, 213-215 (SLH), and Asn289. The active-site S-methylcysteine intermediate is Cys332.

It belongs to the radical SAM superfamily. RlmN family. [4Fe-4S] cluster is required as a cofactor.

The protein resides in the cytoplasm. The catalysed reaction is adenosine(2503) in 23S rRNA + 2 reduced [2Fe-2S]-[ferredoxin] + 2 S-adenosyl-L-methionine = 2-methyladenosine(2503) in 23S rRNA + 5'-deoxyadenosine + L-methionine + 2 oxidized [2Fe-2S]-[ferredoxin] + S-adenosyl-L-homocysteine. It catalyses the reaction adenosine(37) in tRNA + 2 reduced [2Fe-2S]-[ferredoxin] + 2 S-adenosyl-L-methionine = 2-methyladenosine(37) in tRNA + 5'-deoxyadenosine + L-methionine + 2 oxidized [2Fe-2S]-[ferredoxin] + S-adenosyl-L-homocysteine. In terms of biological role, specifically methylates position 2 of adenine 2503 in 23S rRNA and position 2 of adenine 37 in tRNAs. The sequence is that of Probable dual-specificity RNA methyltransferase RlmN from Lachnospira eligens (strain ATCC 27750 / DSM 3376 / VPI C15-48 / C15-B4) (Eubacterium eligens).